The primary structure comprises 136 residues: Photosystem II extrinsic protein U (136 aa).

An N-terminal signal peptide occupies residues 1–28; sequence MKQLAQRLFSLALVLALVLGISVQSAQA.

It belongs to the PsbU family. PSII is composed of 1 copy each of membrane proteins PsbA, PsbB, PsbC, PsbD, PsbE, PsbF, PsbH, PsbI, PsbJ, PsbK, PsbL, PsbM, PsbT, PsbX, PsbY, PsbZ, Psb30/Ycf12, peripheral proteins PsbO, CyanoQ (PsbQ), PsbU, PsbV and a large number of cofactors. It forms dimeric complexes.

The protein localises to the cellular thylakoid membrane. One of the extrinsic, lumenal subunits of photosystem II (PSII). PSII is a light-driven water plastoquinone oxidoreductase, using light energy to abstract electrons from H(2)O, generating a proton gradient subsequently used for ATP formation. The extrinsic proteins stabilize the structure of photosystem II oxygen-evolving complex (OEC), the ion environment of oxygen evolution and protect the OEC against heat-induced inactivation. This chain is Photosystem II extrinsic protein U, found in Synechococcus elongatus (strain ATCC 33912 / PCC 7942 / FACHB-805) (Anacystis nidulans R2).